Reading from the N-terminus, the 359-residue chain is DNA integrity scanning protein DisA (359 aa).

The DAC domain occupies 7–145 (DDIFRATLAA…AGRRYVLDGA (139 aa)). ATP-binding positions include Gly-74, Leu-92, and 105 to 109 (TRHRT).

Belongs to the DisA family. As to quaternary structure, homooctamer. Mg(2+) is required as a cofactor.

The enzyme catalyses 2 ATP = 3',3'-c-di-AMP + 2 diphosphate. Functionally, participates in a DNA-damage check-point that is active prior to asymmetric division when DNA is damaged. DisA forms globular foci that rapidly scan along the chromosomes during sporulation, searching for lesions. When a lesion is present, DisA pauses at the lesion site. This triggers a cellular response that culminates in a temporary block in sporulation initiation. Also has diadenylate cyclase activity, catalyzing the condensation of 2 ATP molecules into cyclic di-AMP (c-di-AMP). c-di-AMP acts as a signaling molecule that couples DNA integrity with progression of sporulation. The rise in c-di-AMP level generated by DisA while scanning the chromosome, operates as a positive signal that advances sporulation; upon encountering a lesion, the DisA focus arrests at the damaged site and halts c-di-AMP synthesis. The protein is DNA integrity scanning protein DisA of Parafrankia sp. (strain EAN1pec).